We begin with the raw amino-acid sequence, 387 residues long: Probable multidrug resistance protein EmrK (387 aa).

The Cytoplasmic segment spans residues 1 to 16; sequence MEQINSNKKHSNRRKY. A helical transmembrane segment spans residues 17 to 37; that stretch reads FSLLAVVLFIAFSGAYAYWSM. Residues 38 to 387 lie on the Periplasmic side of the membrane; the sequence is ELEDMISTDD…SNIISHNGQL (350 aa).

Belongs to the membrane fusion protein (MFP) (TC 8.A.1) family. In terms of assembly, part of the tripartite efflux system EmrYK-TolC, which is composed of an inner membrane transporter, EmrY, a membrane fusion protein, EmrK, and an outer membrane component, TolC. The complex forms a large protein conduit and can translocate molecules across both the inner and outer membranes.

It is found in the cell inner membrane. Functionally, part of the tripartite efflux system EmrYK-TolC, which confers resistance to various drugs. The sequence is that of Probable multidrug resistance protein EmrK (emrK) from Escherichia coli (strain K12).